The primary structure comprises 150 residues: Macrodomain Ter protein (150 aa).

It belongs to the MatP family. As to quaternary structure, homodimer.

It localises to the cytoplasm. Functionally, required for spatial organization of the terminus region of the chromosome (Ter macrodomain) during the cell cycle. Prevents early segregation of duplicated Ter macrodomains during cell division. Binds specifically to matS, which is a 13 bp signature motif repeated within the Ter macrodomain. The polypeptide is Macrodomain Ter protein (Escherichia coli O8 (strain IAI1)).